A 247-amino-acid polypeptide reads, in one-letter code: Protein LIFEGUARD 4 (247 aa).

The next 7 membrane-spanning stretches (helical) occupy residues 42 to 62 (VYSIIAFQLLATIAVASTVVF), 75 to 95 (AGLALWIVLIITPLIVMCPLY), 105 to 125 (YLLLGIFTVALAFAVGLTCAF), 130 to 150 (VILEAAILTTVVVLSLTVYTF), 165 to 185 (FLFGALIVLMVFALIQIFFPL), 188 to 208 (ISVMIYGCLAAIIFCGYIVYD), and 222 to 242 (IWAAVSLYLDIINLFLALLTI).

This sequence belongs to the BI1 family.

The protein resides in the membrane. This chain is Protein LIFEGUARD 4, found in Arabidopsis thaliana (Mouse-ear cress).